The chain runs to 291 residues: MSEIRLFVTTTEKQAAAVLDVMSAIFEEDDYAIATMEIDEKRDVWEASVYMMTDEEESVRSRLAQALEVEFSHLPIEREVLPDVDWIAKSLEGLAPVRAGRFVIHGSHDRDKVKPGEIAIEIDAGQAFGTGHHGTTAGCLEMLASVARSRPVRNALDLGTGSGVLAIAAWKLLHVPVLATDIDPIATRVAADNARRNGVVTGLTFATAPGFHSTTFSTNGPFDLIIANILARPLMKMAPQLVANLAPGGSVILSGILAEQRWKVLAAYNGQNLKHARTLWRNGWVTIHLTR.

S-adenosyl-L-methionine-binding residues include T136, G159, D181, and N228.

Belongs to the methyltransferase superfamily. PrmA family.

The protein resides in the cytoplasm. It carries out the reaction L-lysyl-[protein] + 3 S-adenosyl-L-methionine = N(6),N(6),N(6)-trimethyl-L-lysyl-[protein] + 3 S-adenosyl-L-homocysteine + 3 H(+). Methylates ribosomal protein L11. This chain is Ribosomal protein L11 methyltransferase, found in Rhizobium meliloti (strain 1021) (Ensifer meliloti).